Consider the following 102-residue polypeptide: Crustacean hyperglycemic hormones 3 (102 aa).

The signal sequence occupies residues 1 to 22 (MIALRLIAVTLVVAMAASTTWA). 3 disulfides stabilise this stretch: C35/C71, C51/C67, and C54/C80. Residue V100 is modified to Valine amide.

It belongs to the arthropod CHH/MIH/GIH/VIH hormone family.

It localises to the secreted. Its function is as follows. Hormone found in the sinus gland of isopods and decapods which controls the blood sugar level. Has a secretagogue action over the amylase released from the midgut gland. May act as a stress hormone and may be involved in the control of molting and reproduction. This Penaeus monodon (Giant tiger prawn) protein is Crustacean hyperglycemic hormones 3 (CHH3).